Consider the following 219-residue polypeptide: Exosomal polycystin-1-interacting protein (219 aa).

The first 19 residues, 1–19 (MAPPSRHCLLLISTLGVFA), serve as a signal peptide directing secretion. Residues Asn29, Asn42, Asn95, Asn188, and Asn210 are each glycosylated (N-linked (GlcNAc...) asparagine).

This sequence belongs to the EPCIP family. As to quaternary structure, homooligomer. Interacts with PKD1 (via the PKD repeats in the N-terminal extracellular region); the interaction is not dependent on N-glycosylation of either protein. N-glycosylated. In terms of tissue distribution, detected in the kidney and in the endothelium of large blood vessels (at protein level).

The protein resides in the vesicle. The protein localises to the secreted. It is found in the extracellular exosome. In terms of biological role, likely to be involved with PKD1 in the detection, sequestration and exocytosis of senescent mitochondria. The sequence is that of Exosomal polycystin-1-interacting protein from Homo sapiens (Human).